Consider the following 284-residue polypeptide: MKNIGIAINPSKDYKNTILNMVKEKIKNICNITDIEVYNSFDIKNLNLSSLDLLIVLGGDGTLLGVARELDDDFKAPILGINIGNLGVLSSIEISDLELALKKLMTKDCKVHKRMMLNCEVDINESIKNIKALNEVAVARGTLSRMVKFKIFVDEKLYAIFKGDGLIVSTPTGSTAYSFSAGGPFICPDLEVISIVPICDHTKSMHPIVLKGDSTIKIIAQNGGDQIYLTIDGQRAIEMKDNSVITVKKNPKSLKLLLFNDYDYFKVIRNKVLNNSKECDGEKN.

Catalysis depends on Asp60, which acts as the Proton acceptor. NAD(+) is bound by residues Asp60–Gly61, Asn134–Glu135, Arg145, Lys162, Asp164, Thr175–Ser180, and Gln234.

It belongs to the NAD kinase family. It depends on a divalent metal cation as a cofactor.

It localises to the cytoplasm. The catalysed reaction is NAD(+) + ATP = ADP + NADP(+) + H(+). Functionally, involved in the regulation of the intracellular balance of NAD and NADP, and is a key enzyme in the biosynthesis of NADP. Catalyzes specifically the phosphorylation on 2'-hydroxyl of the adenosine moiety of NAD to yield NADP. This chain is NAD kinase, found in Clostridium botulinum (strain Eklund 17B / Type B).